Consider the following 137-residue polypeptide: Large ribosomal subunit protein uL16 (137 aa).

This sequence belongs to the universal ribosomal protein uL16 family. In terms of assembly, part of the 50S ribosomal subunit.

Binds 23S rRNA and is also seen to make contacts with the A and possibly P site tRNAs. The polypeptide is Large ribosomal subunit protein uL16 (Francisella tularensis subsp. holarctica (strain FTNF002-00 / FTA)).